We begin with the raw amino-acid sequence, 86 residues long: Neuropeptide precursor capa-1 (86 aa).

Residues 1–19 (MLLWIVATLLIFSLPVSTA) form the signal peptide.

Expressed in two pairs of neurons in the anterior part of the nervous system (at protein level).

Encodes at least three neuropeptides: two of the periviscerokinin family (APHPSSALLVPYPRV-amide and LYMARV-amide) and one pyrokinin (AFFYTPRI-amide). Functionally, putative ligand for neuromedin U receptor homolog nmur-2. This chain is Neuropeptide precursor capa-1, found in Caenorhabditis elegans.